Here is a 1056-residue protein sequence, read N- to C-terminus: Carbamoyl phosphate synthase large chain (1056 aa).

The segment at 1 to 399 (MKIDVSKVIV…AFQKAIRMLD (399 aa)) is carboxyphosphate synthetic domain. Residues arginine 127, arginine 167, glycine 173, glycine 174, lysine 206, leucine 208, glutamate 213, glycine 239, valine 240, histidine 241, glutamine 282, and glutamate 296 each contribute to the ATP site. Residues 131–325 (QKTMKKVGLP…LAYIATKLAI (195 aa)) enclose the ATP-grasp 1 domain. The Mg(2+) site is built by glutamine 282, glutamate 296, and asparagine 298. 3 residues coordinate Mn(2+): glutamine 282, glutamate 296, and asparagine 298. Positions 400–536 (IGDELIGKYY…VTYDGVENDI (137 aa)) are oligomerization domain. The tract at residues 537-919 (PKPKKPSILV…LKSWLSVKPN (383 aa)) is carbamoyl phosphate synthetic domain. Residues 661 to 849 (SKLLEKLGIP…LMELSAQAVL (189 aa)) enclose the ATP-grasp 2 domain. Residues arginine 697, lysine 736, isoleucine 738, glutamate 742, glycine 766, valine 767, histidine 768, serine 769, glutamine 809, and glutamate 820 each contribute to the ATP site. Mg(2+) contacts are provided by glutamine 809, glutamate 820, and asparagine 822. 3 residues coordinate Mn(2+): glutamine 809, glutamate 820, and asparagine 822. Residues 915 to 1043 (SVKPNELPKT…REYWIRKIEE (129 aa)) form the MGS-like domain. Residues 920–1056 (ELPKTSALIY…EYAASVVLRR (137 aa)) are allosteric domain.

It belongs to the CarB family. As to quaternary structure, composed of two chains; the small (or glutamine) chain promotes the hydrolysis of glutamine to ammonia, which is used by the large (or ammonia) chain to synthesize carbamoyl phosphate. Tetramer of heterodimers (alpha,beta)4. Mg(2+) serves as cofactor. Mn(2+) is required as a cofactor.

It carries out the reaction hydrogencarbonate + L-glutamine + 2 ATP + H2O = carbamoyl phosphate + L-glutamate + 2 ADP + phosphate + 2 H(+). The enzyme catalyses hydrogencarbonate + NH4(+) + 2 ATP = carbamoyl phosphate + 2 ADP + phosphate + 2 H(+). It functions in the pathway amino-acid biosynthesis; L-arginine biosynthesis; carbamoyl phosphate from bicarbonate: step 1/1. Its pathway is pyrimidine metabolism; UMP biosynthesis via de novo pathway; (S)-dihydroorotate from bicarbonate: step 1/3. In terms of biological role, large subunit of the glutamine-dependent carbamoyl phosphate synthetase (CPSase). CPSase catalyzes the formation of carbamoyl phosphate from the ammonia moiety of glutamine, carbonate, and phosphate donated by ATP, constituting the first step of 2 biosynthetic pathways, one leading to arginine and/or urea and the other to pyrimidine nucleotides. The large subunit (synthetase) binds the substrates ammonia (free or transferred from glutamine from the small subunit), hydrogencarbonate and ATP and carries out an ATP-coupled ligase reaction, activating hydrogencarbonate by forming carboxy phosphate which reacts with ammonia to form carbamoyl phosphate. In Pyrococcus furiosus (strain ATCC 43587 / DSM 3638 / JCM 8422 / Vc1), this protein is Carbamoyl phosphate synthase large chain.